The primary structure comprises 362 residues: Hydroxycarboxylate dehydrogenase A (362 aa).

Residues Asp173, His257, and His274 each contribute to the Zn(2+) site.

Belongs to the iron-containing alcohol dehydrogenase family. Requires Zn(2+) as cofactor.

It catalyses the reaction 2-hydroxybutanoate + NADP(+) = 2-oxobutanoate + NADPH + H(+). The enzyme catalyses 2-hydroxyglutarate + NADP(+) = 2-oxoglutarate + NADPH + H(+). In terms of biological role, catalyzes the NADPH-dependent reduction of 2-oxoglutarate and 2-oxobutanoate, leading to the respective 2-hydroxycarboxylate. Cannot use NADH instead of NADPH as a redox partner. Do not catalyze the reverse reactions. This is Hydroxycarboxylate dehydrogenase A from Escherichia coli (strain K12).